A 34-amino-acid chain; its full sequence is GFSSLFKAGAKYLLKSVGKAGAQQLACKAANNCA.

Cys27 and Cys33 are oxidised to a cystine.

As to expression, expressed by the skin glands.

It is found in the secreted. Its function is as follows. Antimicrobial peptide. Active against the Gram-positive bacteria S.aureus FDA209P (MIC=14.9 ug/ml) and B.subtilis ATCC 6633 (MIC&gt;64 ug/ml), but not active against the Gram-negative bacterium E.coli or the fungus C.albicans. This chain is Brevinin-2GHa, found in Sylvirana guentheri (Gunther's frog).